A 441-amino-acid polypeptide reads, in one-letter code: MAEAKEENREKNEEEESVKLFVGQIPKHMSESQLLTLFQEFAVVDEVNIIKDKITRASRGCCFLLCPSREEADKLVNACHNKKTLPGANSLLQVKYADGELERLEHKLFVGMLPKNVSEAEVQSLFSKYGTIKDLQILRGAQQTSKGCAFLKYETKEQAVSAMESINGKHKMEGSTVPLVVKWADTERERHTRRLQKAQSHIARLGNGDPTNPSLFGALPMGYVPPYNGYGYHQPPGTYGYMLPPIQNQAAFSNMIAQPNQGNNNALQGTSPDSVPPRLARRNFPMPPGNYMGSGYPAMRGHPFPFAYPRGIVSPRPLSSSPGSISPGMSTPLGIGLSSVVQTEGPEGANLFIYNIPREFGDQELAAAFQSFGIVLSAKVFVDKATGVSKCFGFVSYDSQAAAQNAIDMMNGRHLGGKKLKVQLKRDSNNGQPSSNPSLIS.

2 RRM domains span residues 18–99 (VKLF…YADG) and 106–186 (HKLF…WADT). Polar residues predominate over residues 258 to 273 (QPNQGNNNALQGTSPD). Residues 258–282 (QPNQGNNNALQGTSPDSVPPRLARR) form a disordered region. Residues 349 to 427 (ANLFIYNIPR…KKLKVQLKRD (79 aa)) enclose the RRM 3 domain.

As to expression, highly expressed in stems and cauline leaves, and at lower levels in siliques, flowers, roots and rosette leaves.

It localises to the cytoplasm. Functionally, RNA-binding protein involved in the regulation of flowering time. Acts as a repressor of the activity of SOC1, a transcriptional activator of flowering time. Binds to the 3'-UTR of SOC1 mRNA in the cytoplasm and participates in SOC1 mRNA decay, mediated by the distal region of the SOC1 3'-UTR. Acts as a positive regulator of salicylic acid (SA)-mediated immunity. May act on SA signaling-related genes at a post-transcriptional level. The sequence is that of RNA-binding protein BRN1 from Arabidopsis thaliana (Mouse-ear cress).